Here is a 245-residue protein sequence, read N- to C-terminus: rRNA adenine N-6-methyltransferase (245 aa).

6 residues coordinate S-adenosyl-L-methionine: Asn-10, Leu-12, Gly-37, Glu-58, Asp-83, and Asn-100.

Belongs to the class I-like SAM-binding methyltransferase superfamily. rRNA adenine N(6)-methyltransferase family.

The catalysed reaction is adenosine(2085) in 23S rRNA + 2 S-adenosyl-L-methionine = N(6)-dimethyladenosine(2085) in 23S rRNA + 2 S-adenosyl-L-homocysteine + 2 H(+). This protein produces a dimethylation of the adenine residue at position 2085 in 23S rRNA, resulting in reduced affinity between ribosomes and macrolide-lincosamide-streptogramin B antibiotics. This is rRNA adenine N-6-methyltransferase (ermBC) from Escherichia coli.